Reading from the N-terminus, the 225-residue chain is tRNA (guanine-N(1)-)-methyltransferase (225 aa).

S-adenosyl-L-methionine is bound by residues G112 and 132-137 (IGDYVL).

This sequence belongs to the RNA methyltransferase TrmD family. Homodimer.

Its subcellular location is the cytoplasm. It catalyses the reaction guanosine(37) in tRNA + S-adenosyl-L-methionine = N(1)-methylguanosine(37) in tRNA + S-adenosyl-L-homocysteine + H(+). Its function is as follows. Specifically methylates guanosine-37 in various tRNAs. In Bacteroides thetaiotaomicron (strain ATCC 29148 / DSM 2079 / JCM 5827 / CCUG 10774 / NCTC 10582 / VPI-5482 / E50), this protein is tRNA (guanine-N(1)-)-methyltransferase.